The chain runs to 553 residues: Zinc finger protein 324A (553 aa).

One can recognise a KRAB domain in the interval 1 to 72 (MAFEDVAVYF…SGTDTTLSRT (72 aa)). Positions 130 to 135 (PSRERK) match the Nuclear localization signal motif. Residues 186 to 221 (GRQPRTPERQKPCAQEVPGRTFGSAQDLEAAGGRGH) form a disordered region. C2H2-type zinc fingers lie at residues 257–279 (FECRACSKVFVKSSDLLKHLRTH), 285–307 (YECAQCGKAFSQTSHLTQHQRIH), 313–335 (YACPVCGKAFRHSSSLVRHQRIH), 341–363 (FRCSECGKAFSHGSNLSQHRKIH), 369–391 (YACAQCGRRFCRNSHLIQHERTH), 397–419 (FVCALCGAAFSQGSSLFKHQRVH), 425–447 (FACPQCGRAFSHSSNLTQHQLLH), 453–475 (FRCVDCGKAFAKGAVLLSHRRIH), and 481–503 (FVCTQCGRAFRERPALFHHQRIH). The disordered stretch occupies residues 502–553 (IHTGEKTVRRSRASLHPQARSVAGASSEGAPAKETEPTPASGPAAVSQPAEV).

This sequence belongs to the krueppel C2H2-type zinc-finger protein family. Expressed at high levels in the spleen, thymus, and PBMC, at low levels in the prostate, ovary, small intestine, colon (mucosal lining), placenta, lung, and pancreas, and very weakly expressed in the liver and kidney.

It is found in the nucleus. May be involved in transcriptional regulation. May be involved in regulation of cell proliferation. This chain is Zinc finger protein 324A (ZNF324), found in Homo sapiens (Human).